The primary structure comprises 276 residues: Thymidylate synthase (276 aa).

Arg-26 lines the dUMP pocket. (6R)-5,10-methylene-5,6,7,8-tetrahydrofolate is bound at residue His-56. Residue 131–132 coordinates dUMP; that stretch reads RR. Cys-151 functions as the Nucleophile in the catalytic mechanism. DUMP-binding positions include 178-181, Asn-189, and 219-221; these read RSAD and HIY. A (6R)-5,10-methylene-5,6,7,8-tetrahydrofolate-binding site is contributed by Asp-181. Ala-275 is a binding site for (6R)-5,10-methylene-5,6,7,8-tetrahydrofolate.

It belongs to the thymidylate synthase family. Bacterial-type ThyA subfamily. In terms of assembly, homodimer.

The protein localises to the cytoplasm. It carries out the reaction dUMP + (6R)-5,10-methylene-5,6,7,8-tetrahydrofolate = 7,8-dihydrofolate + dTMP. It functions in the pathway pyrimidine metabolism; dTTP biosynthesis. Functionally, catalyzes the reductive methylation of 2'-deoxyuridine-5'-monophosphate (dUMP) to 2'-deoxythymidine-5'-monophosphate (dTMP) while utilizing 5,10-methylenetetrahydrofolate (mTHF) as the methyl donor and reductant in the reaction, yielding dihydrofolate (DHF) as a by-product. This enzymatic reaction provides an intracellular de novo source of dTMP, an essential precursor for DNA biosynthesis. The polypeptide is Thymidylate synthase (Polaromonas naphthalenivorans (strain CJ2)).